Consider the following 360-residue polypeptide: D-alanine--D-alanine ligase (360 aa).

The 210-residue stretch at 134–343 (KILAQRVGVP…YTELITRLIE (210 aa)) folds into the ATP-grasp domain. 169–224 (AEKLGRDMFVKPSNQGSSVGVSHVTNADEYAAALKEAFKYDDKVLVEETVPGTEVE) lines the ATP pocket. Aspartate 297, glutamate 310, and asparagine 312 together coordinate Mg(2+).

This sequence belongs to the D-alanine--D-alanine ligase family. It depends on Mg(2+) as a cofactor. Mn(2+) is required as a cofactor.

It is found in the cytoplasm. It carries out the reaction 2 D-alanine + ATP = D-alanyl-D-alanine + ADP + phosphate + H(+). Its pathway is cell wall biogenesis; peptidoglycan biosynthesis. In terms of biological role, cell wall formation. This is D-alanine--D-alanine ligase from Lactobacillus helveticus (strain DPC 4571).